The sequence spans 169 residues: Cytochrome c-type biogenesis protein CcmE (169 aa).

At 1-7 (MTRKSRR) the chain is on the cytoplasmic side. The chain crosses the membrane as a helical; Signal-anchor for type II membrane protein span at residues 8–28 (LILIAACGAVLALALGLILSA). The Periplasmic segment spans residues 29 to 169 (MSGSIVFFRS…DATLGQRSER (141 aa)). The heme site is built by His122 and Tyr126. The disordered stretch occupies residues 135–169 (LKAQGRWQEGGGKEAPKDAAKPASADATLGQRSER). Residues 145 to 154 (GGKEAPKDAA) show a composition bias toward basic and acidic residues.

This sequence belongs to the CcmE/CycJ family.

The protein localises to the cell inner membrane. In terms of biological role, heme chaperone required for the biogenesis of c-type cytochromes. Transiently binds heme delivered by CcmC and transfers the heme to apo-cytochromes in a process facilitated by CcmF and CcmH. This chain is Cytochrome c-type biogenesis protein CcmE, found in Methylorubrum populi (strain ATCC BAA-705 / NCIMB 13946 / BJ001) (Methylobacterium populi).